A 179-amino-acid polypeptide reads, in one-letter code: Inner membrane-spanning protein YciB (179 aa).

Helical transmembrane passes span 22–42 (IYVASGALIVATALALVFTWF), 50–70 (MTLITFLMVLVFGTLTLVFHN), 76–96 (WKVTIIYTLFALALLISQLVL), 121–141 (LAWAVFFLVCGLANIYVAFWL), and 149–169 (FKVFGLTALTLVFTLLSGVYI).

It belongs to the YciB family.

It is found in the cell inner membrane. Plays a role in cell envelope biogenesis, maintenance of cell envelope integrity and membrane homeostasis. The chain is Inner membrane-spanning protein YciB from Serratia proteamaculans (strain 568).